The primary structure comprises 327 residues: DNA-directed RNA polymerase subunit alpha (327 aa).

Positions 1-233 are alpha N-terminal domain (alpha-NTD); that stretch reads MQNVLKSFLT…HQLAAFVDLK (233 aa). An alpha C-terminal domain (alpha-CTD) region spans residues 247–327; the sequence is VNPLLLRPVE…GWPPADLTDQ (81 aa).

Belongs to the RNA polymerase alpha chain family. As to quaternary structure, homodimer. The RNAP catalytic core consists of 2 alpha, 1 beta, 1 beta' and 1 omega subunit. When a sigma factor is associated with the core the holoenzyme is formed, which can initiate transcription.

It catalyses the reaction RNA(n) + a ribonucleoside 5'-triphosphate = RNA(n+1) + diphosphate. DNA-dependent RNA polymerase catalyzes the transcription of DNA into RNA using the four ribonucleoside triphosphates as substrates. This Coxiella burnetii (strain CbuK_Q154) (Coxiella burnetii (strain Q154)) protein is DNA-directed RNA polymerase subunit alpha.